The primary structure comprises 269 residues: Interleukin-1 beta (269 aa).

Positions 1–117 are excised as a propeptide; it reads MATVPELNCE…DDDDNLLVCD (117 aa).

This sequence belongs to the IL-1 family. In terms of assembly, monomer. Interacts with MEFV. Interacts with integrins ITGAV:ITGBV and ITGA5:ITGB1; integrin-binding is required for IL1B signaling. Interacts with cargo receptor TMED10; the interaction is direct and is required for the secretion of IL1B mature form. Interacts with HSP90AB1; the interaction facilitates cargo translocation into the ERGIC. Interacts with HSP90B1; the interaction facilitates cargo translocation into the ERGIC. In terms of tissue distribution, expressed in activated macrophages (at protein level).

The protein localises to the cytoplasm. It localises to the cytosol. It is found in the secreted. The protein resides in the lysosome. Its subcellular location is the extracellular exosome. Potent pro-inflammatory cytokine. Initially discovered as the major endogenous pyrogen, induces prostaglandin synthesis, neutrophil influx and activation, T-cell activation and cytokine production, B-cell activation and antibody production, and fibroblast proliferation and collagen production. Promotes Th17 differentiation of T-cells. Synergizes with IL12/interleukin-12 to induce IFNG synthesis from T-helper 1 (Th1) cells. Plays a role in angiogenesis by inducing VEGF production synergistically with TNF and IL6. Involved in transduction of inflammation downstream of pyroptosis: its mature form is specifically released in the extracellular milieu by passing through the gasdermin-D (GSDMD) pore. The polypeptide is Interleukin-1 beta (Il1b) (Mus musculus (Mouse)).